Consider the following 77-residue polypeptide: Translation initiation factor IF-1, chloroplastic (77 aa).

The S1-like domain maps to 1–71 (MKEQKWIHEG…TRGRIIYRLR (71 aa)).

Belongs to the IF-1 family. In terms of assembly, component of the 30S ribosomal translation pre-initiation complex which assembles on the 30S ribosome in the order IF-2 and IF-3, IF-1 and N-formylmethionyl-tRNA(fMet); mRNA recruitment can occur at any time during PIC assembly.

The protein resides in the plastid. It localises to the chloroplast. In terms of biological role, one of the essential components for the initiation of protein synthesis. Stabilizes the binding of IF-2 and IF-3 on the 30S subunit to which N-formylmethionyl-tRNA(fMet) subsequently binds. Helps modulate mRNA selection, yielding the 30S pre-initiation complex (PIC). Upon addition of the 50S ribosomal subunit IF-1, IF-2 and IF-3 are released leaving the mature 70S translation initiation complex. In Garrya elliptica (Wavyleaf silktassel), this protein is Translation initiation factor IF-1, chloroplastic.